The primary structure comprises 192 residues: Large ribosomal subunit protein uL5 (192 aa).

It belongs to the universal ribosomal protein uL5 family. Part of the 50S ribosomal subunit; part of the 5S rRNA/L5/L18/L25 subcomplex. Contacts the 5S rRNA and the P site tRNA. Forms a bridge to the 30S subunit in the 70S ribosome.

This is one of the proteins that bind and probably mediate the attachment of the 5S RNA into the large ribosomal subunit, where it forms part of the central protuberance. In the 70S ribosome it contacts protein S13 of the 30S subunit (bridge B1b), connecting the 2 subunits; this bridge is implicated in subunit movement. Contacts the P site tRNA; the 5S rRNA and some of its associated proteins might help stabilize positioning of ribosome-bound tRNAs. This is Large ribosomal subunit protein uL5 from Sphingopyxis alaskensis (strain DSM 13593 / LMG 18877 / RB2256) (Sphingomonas alaskensis).